The sequence spans 92 residues: MNVPFDRYVSFKNADWEGKSQRVMAKLQSHIDAADNPFWGYFAKKRTELNEKQGLDDLRVLHNYLPTLREILEESGDDETLAMLEDLEVTCM.

The protein belongs to the CowN family.

Its function is as follows. Is required to sustain N(2)-dependent growth in the presence of low levels of carbon monoxide (CO). Probably acts by protecting the N(2) fixation ability of the nitrogenase complex, which is inactivated in the presence of CO. This Rhodopseudomonas palustris (strain BisB18) protein is N(2)-fixation sustaining protein CowN.